Consider the following 713-residue polypeptide: Fibroblast growth factor receptor 4 (713 aa).

A signal peptide spans 1–20 (MLPLWLVLAGLLLAVGPAAS). The disordered stretch occupies residues 21–54 (HRGEMEPDSLASGDDDEDSDGDGPHGDRSEEPVY). Residues 21–281 (HRGEMEPDSL…AETSEAKYTD (261 aa)) are Extracellular-facing. A compositionally biased stretch (basic and acidic residues) spans 42 to 54 (DGPHGDRSEEPVY). Ig-like C2-type domains lie at 59–152 (PYWT…YLLD) and 161–261 (PILQ…AWLT). Residues Cys-84 and Cys-136 are joined by a disulfide bond. 5 N-linked (GlcNAc...) asparagine glycosylation sites follow: Asn-133, Asn-170, Asn-202, Asn-223, and Asn-234. An intrachain disulfide couples Cys-183 to Cys-245. Residues 282–302 (IIIYTSGSLAVAMALIIVVLC) form a helical membrane-spanning segment. The Cytoplasmic segment spans residues 303-713 (RMQTQSSKQP…CLFSCPSGRT (411 aa)). Residues 379 to 667 (LVLGKPLGEG…ILAAISEEYL (289 aa)) enclose the Protein kinase domain. ATP contacts are provided by residues 385-393 (LGEGCFGQV) and Lys-415. The active-site Proton acceptor is the Asp-524. 3 positions are modified to phosphotyrosine; by autocatalysis: Tyr-554, Tyr-555, and Tyr-666.

The protein belongs to the protein kinase superfamily. Tyr protein kinase family. Fibroblast growth factor receptor subfamily. Monomer. Homodimer after ligand binding. Interacts with FGF1, FGF2, FGF4, FGF6, FGF8, FGF9, FGF16, FGF17, FGF18, FGF19, FGF21 and FGF23 (in vitro). Binding affinity for FGF family members is enhanced by interactions between FGFs and heparan sulfate proteoglycans. Interacts with KLB; this strongly increases the affinity for FGF19 and FGF23. Affinity for FGF19 is strongly increased by KLB and sulfated glycosaminoglycans. KLB and KL both interact with the core-glycosylated FGFR4 in the endoplasmic reticulum and promote its degradation, so that only FGFR4 with fully mature N-glycans is expressed at the cell surface. Identified in a complex with NCAM1, CDH2, PLCG1, FRS2, SRC, SHC1, GAP43 and CTTN. Interacts with MMP14 and HIP1. Interacts with STAT3. In terms of processing, N-glycosylated. Full maturation of the glycan chains in the Golgi is essential for high affinity interaction with FGF19. Post-translationally, ubiquitinated. Subject to proteasomal degradation when not fully glycosylated. Autophosphorylated. Binding of FGF family members together with heparan sulfate proteoglycan or heparin promotes receptor dimerization and autophosphorylation on tyrosine residues. Autophosphorylation occurs in trans between the two FGFR molecules present in the dimer.

Its subcellular location is the cell membrane. The protein resides in the endosome. The protein localises to the endoplasmic reticulum. It catalyses the reaction L-tyrosyl-[protein] + ATP = O-phospho-L-tyrosyl-[protein] + ADP + H(+). Present in an inactive conformation in the absence of bound ligand. Ligand binding leads to dimerization and activation by autophosphorylation on tyrosine residues. Tyrosine-protein kinase that acts as a cell-surface receptor for fibroblast growth factors and plays a role in the regulation of cell proliferation, differentiation and migration, and in regulation of lipid metabolism, bile acid biosynthesis, glucose uptake, vitamin D metabolism and phosphate homeostasis. Required for normal down-regulation of the expression of CYP7A1, the rate-limiting enzyme in bile acid synthesis, in response to FGF19. Phosphorylates PLCG1 and FRS2. Ligand binding leads to the activation of several signaling cascades. Activation of PLCG1 leads to the production of the cellular signaling molecules diacylglycerol and inositol 1,4,5-trisphosphate. Phosphorylation of FRS2 triggers recruitment of GRB2, GAB1, PIK3R1 and SOS1, and mediates activation of RAS, MAPK1/ERK2, MAPK3/ERK1 and the MAP kinase signaling pathway, as well as of the AKT1 signaling pathway. Promotes SRC-dependent phosphorylation of the matrix protease MMP14 and its lysosomal degradation. FGFR4 signaling is down-regulated by receptor internalization and degradation; MMP14 promotes internalization and degradation of FGFR4. The chain is Fibroblast growth factor receptor 4 (FGFR4) from Coturnix coturnix (Common quail).